The sequence spans 164 residues: Vasopressin-neurophysin 2-copeptin (164 aa).

The signal sequence occupies residues Met1 to Ala19. Cysteines 20 and 25 form a disulfide. The residue at position 28 (Gly28) is a Glycine amide. 7 cysteine pairs are disulfide-bonded: Cys41/Cys85, Cys44/Cys58, Cys52/Cys75, Cys59/Cys65, Cys92/Cys104, Cys98/Cys116, and Cys105/Cys110. Asn131 carries N-linked (GlcNAc...) asparagine glycosylation.

It belongs to the vasopressin/oxytocin family. As to quaternary structure, interacts with vasopressin receptors V1bR/AVPR1B (Ki=85 pM), V1aR/AVPR1A (Ki=0.6 nM) and V2R/AVPR2 (Ki=4.9 nM). Interacts with oxytocin receptor (OXTR) (Ki=110 nM). (Microbial infection) May interact with SARS coronavirus-2/SARS-CoV-2; they may form a complex with secreted ACE2.

It is found in the secreted. In terms of biological role, specifically binds vasopressin. Its function is as follows. Has a direct antidiuretic action on the kidney, it also causes vasoconstriction of the peripheral vessels. Acts by binding to vasopressin receptors (V1bR/AVPR1B, V1aR/AVPR1A, and V2R/AVPR2). The sequence is that of Vasopressin-neurophysin 2-copeptin (AVP) from Homo sapiens (Human).